The chain runs to 424 residues: Enolase (424 aa).

Position 165 (glutamine 165) interacts with (2R)-2-phosphoglycerate. The active-site Proton donor is glutamate 207. Mg(2+) contacts are provided by aspartate 244, glutamate 283, and aspartate 310. Residues lysine 335, arginine 364, serine 365, and lysine 386 each contribute to the (2R)-2-phosphoglycerate site. Catalysis depends on lysine 335, which acts as the Proton acceptor.

This sequence belongs to the enolase family. Mg(2+) is required as a cofactor.

Its subcellular location is the cytoplasm. The protein localises to the secreted. It localises to the cell surface. It catalyses the reaction (2R)-2-phosphoglycerate = phosphoenolpyruvate + H2O. It functions in the pathway carbohydrate degradation; glycolysis; pyruvate from D-glyceraldehyde 3-phosphate: step 4/5. Catalyzes the reversible conversion of 2-phosphoglycerate (2-PG) into phosphoenolpyruvate (PEP). It is essential for the degradation of carbohydrates via glycolysis. This Chlamydia trachomatis serovar L2 (strain ATCC VR-902B / DSM 19102 / 434/Bu) protein is Enolase.